The primary structure comprises 207 residues: Protein ERP4 (207 aa).

Positions 1–21 (MRVFTLIAILFSSSLLTHAFS) are cleaved as a signal peptide. Over 22–174 (SNYAPVGISL…TVSSTESRLT (153 aa)) the chain is Lumenal. The region spanning 36 to 118 (KECLYYDLSS…PKKVEITLEK (83 aa)) is the GOLD domain. The chain crosses the membrane as a helical span at residues 175-195 (WLSLLIMGVMVGISIVQALII). Residues 196-207 (QFFFTSRQKNYV) lie on the Cytoplasmic side of the membrane.

The protein belongs to the EMP24/GP25L family.

It is found in the endoplasmic reticulum membrane. Its function is as follows. Involved in vesicular protein trafficking. This is Protein ERP4 (ERP4) from Saccharomyces cerevisiae (strain ATCC 204508 / S288c) (Baker's yeast).